A 247-amino-acid chain; its full sequence is Small ribosomal subunit protein uS2 (247 aa).

The protein belongs to the universal ribosomal protein uS2 family.

This chain is Small ribosomal subunit protein uS2, found in Cupriavidus pinatubonensis (strain JMP 134 / LMG 1197) (Cupriavidus necator (strain JMP 134)).